A 118-amino-acid chain; its full sequence is MARIAGINIPDHKHTVIALTAIFGIGKTRSKAICAETGIAENVKISELSEEQIDILREAVGKFVVEGDLRREITLSIKRLMDLGCYRGLRHRRGLPVRGQRTKTNARTRKGPRKPIKK.

Residues Gly94–Lys118 are disordered.

It belongs to the universal ribosomal protein uS13 family. Part of the 30S ribosomal subunit. Forms a loose heterodimer with protein S19. Forms two bridges to the 50S subunit in the 70S ribosome.

Located at the top of the head of the 30S subunit, it contacts several helices of the 16S rRNA. In the 70S ribosome it contacts the 23S rRNA (bridge B1a) and protein L5 of the 50S subunit (bridge B1b), connecting the 2 subunits; these bridges are implicated in subunit movement. Contacts the tRNAs in the A and P-sites. In Klebsiella pneumoniae (strain 342), this protein is Small ribosomal subunit protein uS13.